The chain runs to 562 residues: Probable sesquiterpene synthase (562 aa).

Mg(2+) contacts are provided by Asp315, Asp319, and Glu467. The short motif at 315–319 (DDIYD) is the DDXXD motif element.

Belongs to the terpene synthase family. Tpsa subfamily. The cofactor is Mg(2+). Mn(2+) serves as cofactor.

Sesquiterpene synthase. This Santalum spicatum (Australian sandalwood) protein is Probable sesquiterpene synthase (SesquiTPS).